A 286-amino-acid chain; its full sequence is S-methyl-5'-thioadenosine phosphorylase (286 aa).

Phosphate is bound by residues Ser-11, 53-54 (RH), and 86-87 (SA). Met-185 contacts substrate. Residue Thr-186 participates in phosphate binding. 209–211 (DYD) contributes to the substrate binding site.

It belongs to the PNP/MTAP phosphorylase family. MTAP subfamily. As to quaternary structure, homohexamer. Dimer of a homotrimer.

It carries out the reaction S-methyl-5'-thioadenosine + phosphate = 5-(methylsulfanyl)-alpha-D-ribose 1-phosphate + adenine. It functions in the pathway amino-acid biosynthesis; L-methionine biosynthesis via salvage pathway; S-methyl-5-thio-alpha-D-ribose 1-phosphate from S-methyl-5'-thioadenosine (phosphorylase route): step 1/1. Functionally, catalyzes the reversible phosphorylation of S-methyl-5'-thioadenosine (MTA) to adenine and 5-methylthioribose-1-phosphate. Involved in the breakdown of MTA, a major by-product of polyamine biosynthesis. Responsible for the first step in the methionine salvage pathway after MTA has been generated from S-adenosylmethionine. Has broad substrate specificity with 6-aminopurine nucleosides as preferred substrates. This Geobacter sulfurreducens (strain ATCC 51573 / DSM 12127 / PCA) protein is S-methyl-5'-thioadenosine phosphorylase.